Here is a 381-residue protein sequence, read N- to C-terminus: Dihydroorotate dehydrogenase (quinone) (381 aa).

Residues 74-78 (AGFDK) and Thr98 each bind FMN. Lys78 lines the substrate pocket. 123–127 (NRMGF) is a substrate binding site. Asn152 and Asn185 together coordinate FMN. A substrate-binding site is contributed by Asn185. Ser188 acts as the Nucleophile in catalysis. Asn190 lines the substrate pocket. Residues Lys223 and Thr251 each contribute to the FMN site. 252–253 (NT) serves as a coordination point for substrate. FMN-binding positions include Gly289, Gly318, and 339 to 340 (YT). A disordered region spans residues 359-381 (RSSPPSPDVTLPPENTPVGQIQA).

Belongs to the dihydroorotate dehydrogenase family. Type 2 subfamily. Monomer. The cofactor is FMN.

The protein localises to the cell membrane. The catalysed reaction is (S)-dihydroorotate + a quinone = orotate + a quinol. Its pathway is pyrimidine metabolism; UMP biosynthesis via de novo pathway; orotate from (S)-dihydroorotate (quinone route): step 1/1. In terms of biological role, catalyzes the conversion of dihydroorotate to orotate with quinone as electron acceptor. This is Dihydroorotate dehydrogenase (quinone) from Synechococcus sp. (strain JA-2-3B'a(2-13)) (Cyanobacteria bacterium Yellowstone B-Prime).